A 61-amino-acid chain; its full sequence is Large ribosomal subunit protein bL28A (61 aa).

It belongs to the bacterial ribosomal protein bL28 family.

In Streptomyces coelicolor (strain ATCC BAA-471 / A3(2) / M145), this protein is Large ribosomal subunit protein bL28A (rpmB1).